Here is a 368-residue protein sequence, read N- to C-terminus: Phospho-N-acetylmuramoyl-pentapeptide-transferase (368 aa).

The next 9 membrane-spanning stretches (helical) occupy residues 50-70 (LLALGLGFSLAAIAGYWVVPL), 95-115 (PTMGGIFAIPAGLLPALILAG), 117-137 (SPLVWALAFVTLAYATIGWLD), 156-176 (LCLQFGAAFLFCLWLISQQGW), 183-203 (ITLPFGWSLALSLLFWPLAVF), 218-238 (LDGLAGGTGAAVLAGLGLWLA), 242-262 (PAIATFCCSLAGGFLGFLLHN), 284-304 (AIAIVANCLWVLLVMGGLFVL), and 347-367 (TQVVASFYGLTLLLIASCWLL).

Belongs to the glycosyltransferase 4 family. MraY subfamily. Mg(2+) is required as a cofactor.

The protein resides in the cell inner membrane. It carries out the reaction UDP-N-acetyl-alpha-D-muramoyl-L-alanyl-gamma-D-glutamyl-meso-2,6-diaminopimeloyl-D-alanyl-D-alanine + di-trans,octa-cis-undecaprenyl phosphate = di-trans,octa-cis-undecaprenyl diphospho-N-acetyl-alpha-D-muramoyl-L-alanyl-D-glutamyl-meso-2,6-diaminopimeloyl-D-alanyl-D-alanine + UMP. It functions in the pathway cell wall biogenesis; peptidoglycan biosynthesis. Catalyzes the initial step of the lipid cycle reactions in the biosynthesis of the cell wall peptidoglycan: transfers peptidoglycan precursor phospho-MurNAc-pentapeptide from UDP-MurNAc-pentapeptide onto the lipid carrier undecaprenyl phosphate, yielding undecaprenyl-pyrophosphoryl-MurNAc-pentapeptide, known as lipid I. The protein is Phospho-N-acetylmuramoyl-pentapeptide-transferase of Synechococcus sp. (strain ATCC 27144 / PCC 6301 / SAUG 1402/1) (Anacystis nidulans).